The primary structure comprises 358 residues: Protein-glutamate methylesterase/protein-glutamine glutaminase 1 (358 aa).

Residues 8 to 125 (RVLIVDDSAV…ARGLEGYAEE (118 aa)) form the Response regulatory domain. Asp59 is modified (4-aspartylphosphate). Positions 157-352 (PVPGSALRFR…LERVAERLIA (196 aa)) constitute a CheB-type methylesterase domain. Catalysis depends on residues Ser177, His203, and Asp299.

This sequence belongs to the CheB family. In terms of processing, phosphorylated by CheA. Phosphorylation of the N-terminal regulatory domain activates the methylesterase activity.

Its subcellular location is the cytoplasm. The catalysed reaction is [protein]-L-glutamate 5-O-methyl ester + H2O = L-glutamyl-[protein] + methanol + H(+). It carries out the reaction L-glutaminyl-[protein] + H2O = L-glutamyl-[protein] + NH4(+). In terms of biological role, involved in chemotaxis. Part of a chemotaxis signal transduction system that modulates chemotaxis in response to various stimuli. Catalyzes the demethylation of specific methylglutamate residues introduced into the chemoreceptors (methyl-accepting chemotaxis proteins or MCP) by CheR. Also mediates the irreversible deamidation of specific glutamine residues to glutamic acid. This chain is Protein-glutamate methylesterase/protein-glutamine glutaminase 1, found in Xanthomonas campestris pv. campestris (strain ATCC 33913 / DSM 3586 / NCPPB 528 / LMG 568 / P 25).